The following is a 318-amino-acid chain: Endochitinase 3 (318 aa).

The first 18 residues, 1-18, serve as a signal peptide directing secretion; sequence EFTIFSLLFSLLLLNASA. One can recognise a Chitin-binding type-1 domain in the interval 19 to 60; that stretch reads EQCGSQAGGALCAPGLCCSKFGWCGNTNDYCGPGNCQSQCPG. Cystine bridges form between Cys21-Cys36, Cys30-Cys42, Cys35-Cys49, Cys54-Cys58, Cys89-Cys152, Cys164-Cys172, and Cys271-Cys303. Glu134 serves as the catalytic Proton donor. A propeptide spans 312 to 318 (removed in mature form, vacuolar targeting); it reads GLLVDTV.

The protein belongs to the glycosyl hydrolase 19 family. Chitinase class I subfamily.

It localises to the vacuole. It carries out the reaction Random endo-hydrolysis of N-acetyl-beta-D-glucosaminide (1-&gt;4)-beta-linkages in chitin and chitodextrins.. Its function is as follows. Defense against chitin-containing fungal pathogens. This Solanum tuberosum (Potato) protein is Endochitinase 3 (CHTB3).